We begin with the raw amino-acid sequence, 289 residues long: Release factor glutamine methyltransferase (289 aa).

S-adenosyl-L-methionine contacts are provided by residues 130–134 (GTGTG), Asp-153, Trp-182, and Asn-196. A substrate-binding site is contributed by 196–199 (NPPY).

This sequence belongs to the protein N5-glutamine methyltransferase family. PrmC subfamily.

The enzyme catalyses L-glutaminyl-[peptide chain release factor] + S-adenosyl-L-methionine = N(5)-methyl-L-glutaminyl-[peptide chain release factor] + S-adenosyl-L-homocysteine + H(+). Its function is as follows. Methylates the class 1 translation termination release factors RF1/PrfA and RF2/PrfB on the glutamine residue of the universally conserved GGQ motif. This is Release factor glutamine methyltransferase from Agrobacterium fabrum (strain C58 / ATCC 33970) (Agrobacterium tumefaciens (strain C58)).